A 359-amino-acid chain; its full sequence is Fructose-bisphosphate aldolase class 2 (359 aa).

At Lys9 the chain carries N6-acetyllysine. Ser62 provides a ligand contact to D-glyceraldehyde 3-phosphate. Asp110 functions as the Proton donor in the catalytic mechanism. Residues His111, Asp145, Glu175, and His227 each coordinate Zn(2+). Gly228 contributes to the dihydroxyacetone phosphate binding site. His265 provides a ligand contact to Zn(2+). Residues 266–268 and 287–290 each bind dihydroxyacetone phosphate; these read GGS and NIDT.

The protein belongs to the class II fructose-bisphosphate aldolase family. Homodimer. It depends on Zn(2+) as a cofactor.

The enzyme catalyses beta-D-fructose 1,6-bisphosphate = D-glyceraldehyde 3-phosphate + dihydroxyacetone phosphate. The protein operates within carbohydrate degradation; glycolysis; D-glyceraldehyde 3-phosphate and glycerone phosphate from D-glucose: step 4/4. Functionally, catalyzes the aldol condensation of dihydroxyacetone phosphate (DHAP or glycerone-phosphate) with glyceraldehyde 3-phosphate (G3P) to form fructose 1,6-bisphosphate (FBP) in gluconeogenesis and the reverse reaction in glycolysis. This Escherichia coli O157:H7 protein is Fructose-bisphosphate aldolase class 2 (fbaA).